The chain runs to 285 residues: ATP phosphoribosyltransferase (285 aa).

Belongs to the ATP phosphoribosyltransferase family. Long subfamily. The cofactor is Mg(2+).

It localises to the cytoplasm. It carries out the reaction 1-(5-phospho-beta-D-ribosyl)-ATP + diphosphate = 5-phospho-alpha-D-ribose 1-diphosphate + ATP. The protein operates within amino-acid biosynthesis; L-histidine biosynthesis; L-histidine from 5-phospho-alpha-D-ribose 1-diphosphate: step 1/9. Feedback inhibited by histidine. In terms of biological role, catalyzes the condensation of ATP and 5-phosphoribose 1-diphosphate to form N'-(5'-phosphoribosyl)-ATP (PR-ATP). Has a crucial role in the pathway because the rate of histidine biosynthesis seems to be controlled primarily by regulation of HisG enzymatic activity. The sequence is that of ATP phosphoribosyltransferase from Streptomyces coelicolor (strain ATCC BAA-471 / A3(2) / M145).